A 250-amino-acid chain; its full sequence is MKICLIDETGAGDGALSVLAARWGLEHDEDNLMALVLTPEHLELRKRDEPKLGGIFVDFVGGAMAHRRKFGGGRGEAVAKAVGIKGDYLPDVVDATAGLGRDAFVLASVGCRVRMLERNPVVAALLDDGLARGYADAEIGGWLQERLQLIHASSLTALTDITPRPQVVYLDPMFPHKQKSALVKKEMRVFQSLVGPDLDADGLLEPARLLATKRVVVKRPDYAPPLANVTTPNAVVTKGHRFDIYAGTPV.

S-adenosyl-L-methionine is bound by residues 101 to 102, 117 to 118, 153 to 154, and Asp171; these read RD, ER, and SS.

It belongs to the methyltransferase superfamily. RsmJ family.

The protein resides in the cytoplasm. The enzyme catalyses guanosine(1516) in 16S rRNA + S-adenosyl-L-methionine = N(2)-methylguanosine(1516) in 16S rRNA + S-adenosyl-L-homocysteine + H(+). Specifically methylates the guanosine in position 1516 of 16S rRNA. The sequence is that of Ribosomal RNA small subunit methyltransferase J from Shigella boydii serotype 18 (strain CDC 3083-94 / BS512).